The chain runs to 185 residues: Elongation factor P (185 aa).

Belongs to the elongation factor P family.

It localises to the cytoplasm. It functions in the pathway protein biosynthesis; polypeptide chain elongation. Functionally, involved in peptide bond synthesis. Stimulates efficient translation and peptide-bond synthesis on native or reconstituted 70S ribosomes in vitro. Probably functions indirectly by altering the affinity of the ribosome for aminoacyl-tRNA, thus increasing their reactivity as acceptors for peptidyl transferase. In Dechloromonas aromatica (strain RCB), this protein is Elongation factor P.